Consider the following 92-residue polypeptide: U21-hexatoxin-Hi1a (92 aa).

The first 19 residues, 1 to 19, serve as a signal peptide directing secretion; it reads MKTILSMLIFVALFAAIVG. 4 disulfides stabilise this stretch: cysteine 41-cysteine 55, cysteine 48-cysteine 67, cysteine 54-cysteine 82, and cysteine 85-cysteine 92.

This sequence belongs to the neurotoxin 21 family. Expressed by the venom gland.

The protein resides in the secreted. In terms of biological role, potent insecticidal toxin with probable ion channel impairing activity. In vivo, reversibly paralyzes all flies within 30 minutes, even at low dose (0.3 nmol/g). In Hadronyche infensa (Fraser island funnel-web spider), this protein is U21-hexatoxin-Hi1a.